A 241-amino-acid chain; its full sequence is Triosephosphate isomerase (241 aa).

9–11 contributes to the substrate binding site; sequence NWK. Histidine 96 functions as the Electrophile in the catalytic mechanism. The active-site Proton acceptor is the glutamate 165. Residues glycine 171, serine 204, and 225-226 contribute to the substrate site; that span reads GG.

This sequence belongs to the triosephosphate isomerase family. As to quaternary structure, homodimer.

The protein resides in the cytoplasm. It catalyses the reaction D-glyceraldehyde 3-phosphate = dihydroxyacetone phosphate. Its pathway is carbohydrate biosynthesis; gluconeogenesis. The protein operates within carbohydrate degradation; glycolysis; D-glyceraldehyde 3-phosphate from glycerone phosphate: step 1/1. Involved in the gluconeogenesis. Catalyzes stereospecifically the conversion of dihydroxyacetone phosphate (DHAP) to D-glyceraldehyde-3-phosphate (G3P). This is Triosephosphate isomerase from Nostoc sp. (strain PCC 7120 / SAG 25.82 / UTEX 2576).